We begin with the raw amino-acid sequence, 590 residues long: Zinc finger protein 703 (590 aa).

Positions 1 to 14 (MSDSPAGSNPRTPE) are enriched in polar residues. Disordered stretches follow at residues 1 to 43 (MSDS…DPLR), 96 to 293 (CSQI…AGHV), and 341 to 366 (LVGGQLSGGLGLPPGKPPSSSPLTGA). Serine 2 bears the N-acetylserine mark. Composition is skewed to low complexity over residues 27 to 37 (PAVPAAVSLLP), 128 to 139 (RSAPGAASAAAA), 171 to 189 (GSSSVSSTSSSSSSSPGDK), and 207 to 219 (APVSASSSSSSPG). Positions 241–251 (ELDKKDQEPKP) are enriched in basic and acidic residues. Serine 252 is subject to Phosphoserine. Gly residues-rich tracts occupy residues 260 to 273 (RGGGGEPGAHGGAE) and 341 to 352 (LVGGQLSGGLGL). The C2H2-type zinc-finger motif lies at 456-484 (HSCNWVAASGPCDKRFATSEELLSHLRTH). Arginine 580 carries the post-translational modification Omega-N-methylarginine.

Belongs to the Elbow/Noc family. As to quaternary structure, interacts with TLE4; increases transcriptional repression. Interacts with DCAF7 and PHB2. May interact with HSPD1. Expressed in mammary epithelium.

It localises to the nucleus. Its subcellular location is the cytoplasm. Its function is as follows. Transcriptional corepressor which does not bind directly to DNA and may regulate transcription through recruitment of histone deacetylases to gene promoters. Regulates cell adhesion, migration and proliferation. May be required for segmental gene expression during hindbrain development. This is Zinc finger protein 703 (ZNF703) from Homo sapiens (Human).